We begin with the raw amino-acid sequence, 307 residues long: MTTAASPAALPADWRDFFALTKPRVMTLVIFTGICGLLAAPGAINPILGFTAILCIAMGAGGSAALNQWWEADIDAGMKRTAKRPLPSGRMQATDARDFGILISVASVGIMGIAINWLSAIILAAAIVYYAVIYTIWLKPRTPQNIVIGGGAGAFPPMIGWVAVTGEITLMPVLLFAIIFMWTPPHFWALALFVKTDYEKVGIPMMPVVKGEASTRRQILVYSILLIPFAVAPWAIGATGAIYGVSALLLTGAFAALSVPVATRRQIEGDTMKPEKRLFGFSILYLFALFAALVADRYLTPLIESAA.

9 helical membrane-spanning segments follow: residues 28-48, 50-70, 99-117, 121-138, 146-166, 173-193, 219-239, 241-261, and 278-298; these read LVIF…NPIL, FTAI…NQWW, FGIL…AINW, IILA…TIWL, IVIG…AVTG, VLLF…LALF, ILVY…IGAT, AIYG…SVPV, and LFGF…ADRY.

This sequence belongs to the UbiA prenyltransferase family. Protoheme IX farnesyltransferase subfamily.

Its subcellular location is the cell inner membrane. It carries out the reaction heme b + (2E,6E)-farnesyl diphosphate + H2O = Fe(II)-heme o + diphosphate. It functions in the pathway porphyrin-containing compound metabolism; heme O biosynthesis; heme O from protoheme: step 1/1. Converts heme B (protoheme IX) to heme O by substitution of the vinyl group on carbon 2 of heme B porphyrin ring with a hydroxyethyl farnesyl side group. This Erythrobacter litoralis (strain HTCC2594) protein is Protoheme IX farnesyltransferase.